The primary structure comprises 251 residues: 5-oxoprolinase subunit A (251 aa).

Belongs to the LamB/PxpA family. In terms of assembly, forms a complex composed of PxpA, PxpB and PxpC.

It carries out the reaction 5-oxo-L-proline + ATP + 2 H2O = L-glutamate + ADP + phosphate + H(+). In terms of biological role, catalyzes the cleavage of 5-oxoproline to form L-glutamate coupled to the hydrolysis of ATP to ADP and inorganic phosphate. This is 5-oxoprolinase subunit A from Paracidovorax citrulli (strain AAC00-1) (Acidovorax citrulli).